Here is a 476-residue protein sequence, read N- to C-terminus: Serine protease HTRA1B (476 aa).

A signal peptide spans 1–19; that stretch reads MRLLILCASIILVPLLCDA. One can recognise an IGFBP N-terminal domain in the interval 25–109; that stretch reads YVIGCPERCD…RGKTGVCVCK (85 aa). 6 cysteine pairs are disulfide-bonded: Cys-29/Cys-54, Cys-33/Cys-56, Cys-38/Cys-57, Cys-45/Cys-60, Cys-68/Cys-85, and Cys-79/Cys-106. Residues 94-153 enclose the Kazal-like domain; it reads TTTVRRRGKTGVCVCKSSEPVCGSDGVSYRNICELKRVSNRAQKLQQPPIIFIQRGACGK. The serine protease stretch occupies residues 200–360; it reads GSGFVVSEDG…IPSDKIRQFL (161 aa). Catalysis depends on charge relay system residues His-216, Asp-246, and Ser-324. Residues 361–463 form the PDZ domain; that stretch reads AESHDRQAKG…LRAVVRRGNE (103 aa).

Belongs to the peptidase S1C family. As to quaternary structure, forms homotrimers. In the presence of substrate, may form higher-order multimers in a PDZ-independent manner.

Its subcellular location is the secreted. It localises to the cytoplasm. It is found in the cytosol. Functionally, serine protease with a variety of targets, including extracellular matrix proteins and proteoglycans. Through cleavage of proteoglycans, may release soluble FGF-glycosaminoglycan complexes that promote the range and intensity of FGF signals in the extracellular space. Regulates the availability of insulin-like growth factors (IGFs) by cleaving IGF-binding proteins. Inhibits signaling mediated by TGF-beta family members. Consequently, may regulate many physiological processes. Intracellularly, degrades TSC2, leading to the activation of TSC2 downstream targets. This Danio rerio (Zebrafish) protein is Serine protease HTRA1B (htra1b).